The primary structure comprises 524 residues: Bifunctional NAD(P)H-hydrate repair enzyme Nnr (524 aa).

Residues 1-219 (MKVARVSEIK…ISYPRALLED (219 aa)) are NAD(P)H-hydrate epimerase. One can recognise a YjeF N-terminal domain in the interval 9 to 218 (IKLLDREAAE…HISYPRALLE (210 aa)). An NADPHX 1; for epimerase activity region spans residues 57–61 (NNGGD). K(+) is bound by residues Asn58 and Asp128. Positions 132-138 (GTGLSRP) are NADPHX 1; for epimerase activity. Residues Tyr143 and Asp161 each coordinate (6S)-NADPHX. K(+) is bound at residue Ser164. The YjeF C-terminal domain maps to 224 to 507 (VETNDPVPLP…NYLPKALRAL (284 aa)). The ADP-dependent (S)-NAD(P)H-hydrate dehydratase stretch occupies residues 224-524 (VETNDPVPLP…LERYTIKVLP (301 aa)). Gly330 contacts (6S)-NADPHX. The NADPHX 2; for dehydratase activity stretch occupies residues 381–387 (HAGEMSR). Residues 418–422 (KGAHT) and 438–447 (NPGMATAGSG) contribute to the ADP site. Residue Asp448 participates in (6S)-NADPHX binding.

This sequence in the N-terminal section; belongs to the NnrE/AIBP family. In the C-terminal section; belongs to the NnrD/CARKD family. Requires K(+) as cofactor.

It carries out the reaction (6S)-NADHX + ADP = AMP + phosphate + NADH + H(+). It catalyses the reaction (6S)-NADPHX + ADP = AMP + phosphate + NADPH + H(+). The enzyme catalyses (6R)-NADHX = (6S)-NADHX. The catalysed reaction is (6R)-NADPHX = (6S)-NADPHX. Functionally, bifunctional enzyme that catalyzes the epimerization of the S- and R-forms of NAD(P)HX and the dehydration of the S-form of NAD(P)HX at the expense of ADP, which is converted to AMP. This allows the repair of both epimers of NAD(P)HX, a damaged form of NAD(P)H that is a result of enzymatic or heat-dependent hydration. In Thermofilum pendens (strain DSM 2475 / Hrk 5), this protein is Bifunctional NAD(P)H-hydrate repair enzyme Nnr (nnr).